We begin with the raw amino-acid sequence, 701 residues long: Kinesin-like protein KIN-10C (701 aa).

In terms of domain architecture, Kinesin motor spans 8-318; sequence VVRVVARVKP…LNLASRICLG (311 aa). Position 94 to 101 (94 to 101) interacts with ATP; sequence GARNSGKT.

This sequence belongs to the TRAFAC class myosin-kinesin ATPase superfamily. Kinesin family. KIN-10 subfamily.

This is Kinesin-like protein KIN-10C from Arabidopsis thaliana (Mouse-ear cress).